The primary structure comprises 557 residues: uncharacterized protein (557 aa).

The signal sequence occupies residues 1-30; sequence MAPRRRRHTRIAGLRVVGTATLVAATTLTA. Cys31 carries N-palmitoyl cysteine lipidation. Cys31 is lipidated: S-diacylglycerol cysteine.

To M.bovis Mb2616c and M.leprae ML0489.

It is found in the cell membrane. This is an uncharacterized protein from Mycobacterium tuberculosis (strain CDC 1551 / Oshkosh).